A 293-amino-acid polypeptide reads, in one-letter code: 4-hydroxy-tetrahydrodipicolinate synthase (293 aa).

Threonine 45 provides a ligand contact to pyruvate. The active-site Proton donor/acceptor is the tyrosine 133. Catalysis depends on lysine 161, which acts as the Schiff-base intermediate with substrate. Isoleucine 203 lines the pyruvate pocket.

Belongs to the DapA family. As to quaternary structure, homotetramer; dimer of dimers.

It is found in the cytoplasm. The catalysed reaction is L-aspartate 4-semialdehyde + pyruvate = (2S,4S)-4-hydroxy-2,3,4,5-tetrahydrodipicolinate + H2O + H(+). The protein operates within amino-acid biosynthesis; L-lysine biosynthesis via DAP pathway; (S)-tetrahydrodipicolinate from L-aspartate: step 3/4. Functionally, catalyzes the condensation of (S)-aspartate-beta-semialdehyde [(S)-ASA] and pyruvate to 4-hydroxy-tetrahydrodipicolinate (HTPA). The polypeptide is 4-hydroxy-tetrahydrodipicolinate synthase (Aliivibrio salmonicida (strain LFI1238) (Vibrio salmonicida (strain LFI1238))).